The primary structure comprises 743 residues: Inhibitor of nuclear factor kappa-B kinase subunit alpha (743 aa).

Residues 15–300 (WDMKDRLGTG…MDCGRPQCFV (286 aa)) form the Protein kinase domain. Residues 21 to 29 (LGTGGFGNV) and Lys44 contribute to the ATP site. Asp144 acts as the Proton acceptor in catalysis. The interval 453–474 (LLRFNTNLTKMKNTMVSASQQL) is leucine-zipper. The NEMO-binding stretch occupies residues 736 to 741 (LDFSWL).

This sequence belongs to the protein kinase superfamily. Ser/Thr protein kinase family. I-kappa-B kinase subfamily.

The protein localises to the cytoplasm. Its subcellular location is the nucleus. It catalyses the reaction L-seryl-[I-kappa-B protein] + ATP = O-phospho-L-seryl-[I-kappa-B protein] + ADP + H(+). With respect to regulation, activated when phosphorylated and inactivated when dephosphorylated. In terms of biological role, phosphorylates inhibitors of NF-kappa-B thus leading to the dissociation of the inhibitor/NF-kappa-B complex and ultimately the degradation of the inhibitor. Phosphorylates 'Ser-10' of histone H3 at NF-kappa-B-regulated promoters during inflammatory responses triggered by cytokines. The chain is Inhibitor of nuclear factor kappa-B kinase subunit alpha (chuk) from Xenopus tropicalis (Western clawed frog).